A 513-amino-acid polypeptide reads, in one-letter code: GMP synthase [glutamine-hydrolyzing] (513 aa).

Positions 3 to 200 (SVLVLDFGSQ…LITIAGITPD (198 aa)) constitute a Glutamine amidotransferase type-1 domain. Cys80 serves as the catalytic Nucleophile. Active-site residues include His174 and Glu176. Positions 201-388 (WSSKSFIEHQ…LGIAEDILMR (188 aa)) constitute a GMPS ATP-PPase domain. 228 to 234 (SGGVDST) contacts ATP.

In terms of assembly, homodimer.

The catalysed reaction is XMP + L-glutamine + ATP + H2O = GMP + L-glutamate + AMP + diphosphate + 2 H(+). The protein operates within purine metabolism; GMP biosynthesis; GMP from XMP (L-Gln route): step 1/1. Its function is as follows. Catalyzes the synthesis of GMP from XMP. This is GMP synthase [glutamine-hydrolyzing] from Pelodictyon phaeoclathratiforme (strain DSM 5477 / BU-1).